The primary structure comprises 1122 residues: Transcription-repair-coupling factor (1122 aa).

The 166-residue stretch at 593–758 (DLRNGMLMDR…MTGLKELSII (166 aa)) folds into the Helicase ATP-binding domain. 606-613 (GDVGFGKT) contributes to the ATP binding site. Residues 711–714 (DEEQ) carry the DEEQ box motif. A Helicase C-terminal domain is found at 779-933 (IIRDALLREH…GFTIASRDMD (155 aa)).

This sequence in the N-terminal section; belongs to the UvrB family. In the C-terminal section; belongs to the helicase family. RecG subfamily.

The protein localises to the cytoplasm. In terms of biological role, couples transcription and DNA repair by recognizing RNA polymerase (RNAP) stalled at DNA lesions. Mediates ATP-dependent release of RNAP and its truncated transcript from the DNA, and recruitment of nucleotide excision repair machinery to the damaged site. The protein is Transcription-repair-coupling factor of Rickettsia conorii (strain ATCC VR-613 / Malish 7).